Consider the following 89-residue polypeptide: UPF0237 protein lin0537 (89 aa).

Positions 4–78 (VLTVIGKDNV…EELQVKIHIQ (75 aa)) constitute an ACT domain.

It belongs to the UPF0237 family.

The protein is UPF0237 protein lin0537 of Listeria innocua serovar 6a (strain ATCC BAA-680 / CLIP 11262).